The sequence spans 189 residues: Crossover junction endodeoxyribonuclease RuvC (189 aa).

Residues Asp12, Glu72, and Asp147 contribute to the active site. Mg(2+)-binding residues include Asp12, Glu72, and Asp147.

Belongs to the RuvC family. Homodimer which binds Holliday junction (HJ) DNA. The HJ becomes 2-fold symmetrical on binding to RuvC with unstacked arms; it has a different conformation from HJ DNA in complex with RuvA. In the full resolvosome a probable DNA-RuvA(4)-RuvB(12)-RuvC(2) complex forms which resolves the HJ. Mg(2+) is required as a cofactor.

Its subcellular location is the cytoplasm. It catalyses the reaction Endonucleolytic cleavage at a junction such as a reciprocal single-stranded crossover between two homologous DNA duplexes (Holliday junction).. In terms of biological role, the RuvA-RuvB-RuvC complex processes Holliday junction (HJ) DNA during genetic recombination and DNA repair. Endonuclease that resolves HJ intermediates. Cleaves cruciform DNA by making single-stranded nicks across the HJ at symmetrical positions within the homologous arms, yielding a 5'-phosphate and a 3'-hydroxyl group; requires a central core of homology in the junction. The consensus cleavage sequence is 5'-(A/T)TT(C/G)-3'. Cleavage occurs on the 3'-side of the TT dinucleotide at the point of strand exchange. HJ branch migration catalyzed by RuvA-RuvB allows RuvC to scan DNA until it finds its consensus sequence, where it cleaves and resolves the cruciform DNA. This chain is Crossover junction endodeoxyribonuclease RuvC, found in Porphyromonas gingivalis (strain ATCC BAA-308 / W83).